We begin with the raw amino-acid sequence, 721 residues long: Fatty acid oxidation complex subunit alpha (721 aa).

The interval 1 to 190 (MIYEGKAITV…KVGVVDAIVA (190 aa)) is enoyl-CoA hydratase/isomerase. Asp297 serves as a coordination point for substrate. Residues 312 to 721 (RDVKQAAVLG…SFFGQASSEV (410 aa)) are 3-hydroxyacyl-CoA dehydrogenase. NAD(+) is bound by residues Met325, Asp344, 401 to 403 (VVE), Lys408, and Ser430. His451 serves as the catalytic For 3-hydroxyacyl-CoA dehydrogenase activity. Asn454 contributes to the NAD(+) binding site. Substrate is bound by residues Asn501 and Tyr660.

The protein in the N-terminal section; belongs to the enoyl-CoA hydratase/isomerase family. It in the C-terminal section; belongs to the 3-hydroxyacyl-CoA dehydrogenase family. In terms of assembly, heterotetramer of two alpha chains (FadB) and two beta chains (FadA).

It catalyses the reaction a (3S)-3-hydroxyacyl-CoA + NAD(+) = a 3-oxoacyl-CoA + NADH + H(+). The enzyme catalyses a (3S)-3-hydroxyacyl-CoA = a (2E)-enoyl-CoA + H2O. The catalysed reaction is a 4-saturated-(3S)-3-hydroxyacyl-CoA = a (3E)-enoyl-CoA + H2O. It carries out the reaction (3S)-3-hydroxybutanoyl-CoA = (3R)-3-hydroxybutanoyl-CoA. It catalyses the reaction a (3Z)-enoyl-CoA = a 4-saturated (2E)-enoyl-CoA. The enzyme catalyses a (3E)-enoyl-CoA = a 4-saturated (2E)-enoyl-CoA. It participates in lipid metabolism; fatty acid beta-oxidation. Its function is as follows. Involved in the aerobic and anaerobic degradation of long-chain fatty acids via beta-oxidation cycle. Catalyzes the formation of 3-oxoacyl-CoA from enoyl-CoA via L-3-hydroxyacyl-CoA. It can also use D-3-hydroxyacyl-CoA and cis-3-enoyl-CoA as substrate. The chain is Fatty acid oxidation complex subunit alpha from Pseudomonas syringae pv. tomato (strain ATCC BAA-871 / DC3000).